A 393-amino-acid chain; its full sequence is Selenide, water dikinase (393 aa).

A disordered region spans residues 1–21 (MSEKEGKVIPETNGMKRPRFD). Cysteine 42 is a catalytic residue. Residues lysine 45, 68–70 (GMD), aspartate 93, aspartate 116, and 167–170 (GGQT) each bind ATP. Aspartate 70 contributes to the Mg(2+) binding site. Position 116 (aspartate 116) interacts with Mg(2+). Aspartate 273 serves as a coordination point for Mg(2+).

The protein belongs to the selenophosphate synthase 1 family. Class I subfamily. In terms of assembly, homodimer. The cofactor is Mg(2+).

It catalyses the reaction hydrogenselenide + ATP + H2O = selenophosphate + AMP + phosphate + 2 H(+). Synthesizes selenophosphate from selenide and ATP. The sequence is that of Selenide, water dikinase from Trypanosoma brucei brucei (strain 927/4 GUTat10.1).